The following is a 161-amino-acid chain: Nucleotide-binding protein Bpro_1596 (161 aa).

It belongs to the YajQ family.

Functionally, nucleotide-binding protein. This chain is Nucleotide-binding protein Bpro_1596, found in Polaromonas sp. (strain JS666 / ATCC BAA-500).